The sequence spans 107 residues: Phosphoribosyl-ATP pyrophosphatase (107 aa).

It belongs to the PRA-PH family.

Its subcellular location is the cytoplasm. It catalyses the reaction 1-(5-phospho-beta-D-ribosyl)-ATP + H2O = 1-(5-phospho-beta-D-ribosyl)-5'-AMP + diphosphate + H(+). Its pathway is amino-acid biosynthesis; L-histidine biosynthesis; L-histidine from 5-phospho-alpha-D-ribose 1-diphosphate: step 2/9. This is Phosphoribosyl-ATP pyrophosphatase (hisE) from Rhizobium meliloti (strain 1021) (Ensifer meliloti).